We begin with the raw amino-acid sequence, 72 residues long: Small proline-rich protein 2E (72 aa).

Positions 1–11 (MSYQQQQCKQP) are enriched in low complexity. The segment at 1 to 20 (MSYQQQQCKQPCQPPPVCPT) is disordered. 3 consecutive repeat copies span residues 21–29 (PKCPEPCPP), 30–38 (PKCPEPCPP), and 39–47 (PKCPQPCPP). The tract at residues 21–47 (PKCPEPCPPPKCPEPCPPPKCPQPCPP) is 3 X 9 AA tandem repeats of P-K-C-P-[EQ]-P-C-P-P. The tract at residues 42-72 (PQPCPPQQCQQKCPPVTPSPPCQPKCPPKSK) is disordered. Over residues 56–72 (PVTPSPPCQPKCPPKSK) the composition is skewed to pro residues.

It belongs to the cornifin (SPRR) family.

The protein resides in the cytoplasm. Cross-linked envelope protein of keratinocytes. It is a keratinocyte protein that first appears in the cell cytosol, but ultimately becomes cross-linked to membrane proteins by transglutaminase. All that results in the formation of an insoluble envelope beneath the plasma membrane. The protein is Small proline-rich protein 2E (SPRR2E) of Homo sapiens (Human).